The primary structure comprises 210 residues: Glutathione S-transferase P 1 (210 aa).

The GST N-terminal domain occupies 1 to 80; sequence PEYTIIYFNA…LLARNHDLYG (80 aa). Glutathione contacts are provided by residues Tyr-7, Arg-13, Trp-38, Lys-44, 51–52, and 64–65; these read QL and QS. In terms of domain architecture, GST C-terminal spans 82–203; sequence NPREASLIDM…SSDAHKKRPI (122 aa).

Belongs to the GST superfamily. Pi family. As to quaternary structure, homodimer.

It localises to the cytoplasm. It is found in the mitochondrion. The protein localises to the nucleus. It catalyses the reaction RX + glutathione = an S-substituted glutathione + a halide anion + H(+). Conjugation of reduced glutathione to a wide number of exogenous and endogenous hydrophobic electrophiles. This Bufo bufo (European toad) protein is Glutathione S-transferase P 1.